A 343-amino-acid polypeptide reads, in one-letter code: Phenylalanine--tRNA ligase alpha subunit (343 aa).

Glutamate 264 contributes to the Mg(2+) binding site.

Belongs to the class-II aminoacyl-tRNA synthetase family. Phe-tRNA synthetase alpha subunit type 1 subfamily. In terms of assembly, tetramer of two alpha and two beta subunits. The cofactor is Mg(2+).

The protein resides in the cytoplasm. It carries out the reaction tRNA(Phe) + L-phenylalanine + ATP = L-phenylalanyl-tRNA(Phe) + AMP + diphosphate + H(+). The chain is Phenylalanine--tRNA ligase alpha subunit from Aromatoleum aromaticum (strain DSM 19018 / LMG 30748 / EbN1) (Azoarcus sp. (strain EbN1)).